The chain runs to 291 residues: Pirin-like protein (291 aa).

This sequence belongs to the pirin family.

It is found in the nucleus. This is Pirin-like protein from Solanum lycopersicum (Tomato).